Reading from the N-terminus, the 360-residue chain is MNAPLGGIWLWLPLLLTWLTPEVNSSWWYMRATGGSSRVMCDNVPGLVSSQRQLCHRHPDVMRAISQGVAEWTAECQYQFRQHRWNCNTLDRDHSLFGRVLLRSSRESAFVYAISSAGVVFAITRACSQGEVKSCSCDPKKMGSAKDSKGIFDWGGCSDNIDYGIKFARAFVDAKERKGKDARALMNLHNNRAGRKAVKRFLKQECKCHGVSGSCTLRTCWLAMADFRKTGDYLWRKYNGAIQVVMNQDGTGFTVANERFKKPTKNDLVYFENSPDYCIRDREAGSLGTAGRVCNLTSRGMDSCEVMCCGRGYDTSHVTRMTKCGCKFHWCCAVRCQDCLEALDVHTCKAPKNADWTTPT.

Positions 1–25 are cleaved as a signal peptide; it reads MNAPLGGIWLWLPLLLTWLTPEVNS. 11 disulfides stabilise this stretch: C76–C87, C127–C135, C137–C157, C206–C220, C208–C215, C278–C309, C294–C304, C308–C348, C324–C339, C326–C336, and C331–C332. S212 is lipidated: O-palmitoleoyl serine; by PORCN. An N-linked (GlcNAc...) asparagine glycan is attached at N295.

Belongs to the Wnt family. Post-translationally, palmitoleoylation is required for efficient binding to frizzled receptors. Depalmitoleoylation leads to Wnt signaling pathway inhibition.

Its subcellular location is the secreted. The protein resides in the extracellular space. It localises to the extracellular matrix. Its function is as follows. Ligand for members of the frizzled family of seven transmembrane receptors. Functions in the canonical Wnt signaling pathway that results in activation of transcription factors of the TCF/LEF family. Functions as a upstream regulator of FGF10 expression. Plays an important role in embryonic lung development. May contribute to embryonic brain development by regulating the proliferation of dopaminergic precursors and neurons. The protein is Protein Wnt-2 (WNT2) of Nomascus leucogenys (Northern white-cheeked gibbon).